The sequence spans 273 residues: Large ribosomal subunit protein uL2cz/uL2cy (273 aa).

Disordered stretches follow at residues 1–22 (MAKH…DRQV) and 225–273 (PVDH…RRRK).

Belongs to the universal ribosomal protein uL2 family. In terms of assembly, part of the 50S ribosomal subunit.

Its subcellular location is the plastid. It is found in the chloroplast. The polypeptide is Large ribosomal subunit protein uL2cz/uL2cy (rpl2-A) (Zea mays (Maize)).